The primary structure comprises 193 residues: Large ribosomal subunit protein uL5 (193 aa).

The protein belongs to the universal ribosomal protein uL5 family. Part of the 50S ribosomal subunit; part of the 5S rRNA/L5/L18/L25 subcomplex. Contacts the 5S rRNA and the P site tRNA. Forms a bridge to the 30S subunit in the 70S ribosome.

In terms of biological role, this is one of the proteins that bind and probably mediate the attachment of the 5S RNA into the large ribosomal subunit, where it forms part of the central protuberance. In the 70S ribosome it contacts protein S13 of the 30S subunit (bridge B1b), connecting the 2 subunits; this bridge is implicated in subunit movement. Contacts the P site tRNA; the 5S rRNA and some of its associated proteins might help stabilize positioning of ribosome-bound tRNAs. This is Large ribosomal subunit protein uL5 from Pseudarthrobacter chlorophenolicus (strain ATCC 700700 / DSM 12829 / CIP 107037 / JCM 12360 / KCTC 9906 / NCIMB 13794 / A6) (Arthrobacter chlorophenolicus).